The chain runs to 280 residues: MMVSFTARAKSNVMAYRLLAYSQGDDIIEISHAAENTIPDYVAVKDVDKGDLTQVNMYPLAAWQVIAGSDIKVGDNLTTGKDGTAVPTDDPSTVFGYAVEEAQEGQLVTLVISRSKEISIEVDDIKDAGDTGKRLLKINTPSGARNIIIENEDAKALINGETTNTNKKNLQDLLFSDGNVKAFLQATTTDENKTALQQLLVSNADVLGLLSGNPTSDNKINLRTMIGAGVPYSLPAATTTTLGGVKKGAAVTASTATDVATAVKDLNSLITVLKNAGIIS.

It belongs to the phi29likevirus major capsid fiber protein family. In terms of assembly, homotrimer. Forms a super helix coiled coil in the homotrimer.

The protein localises to the virion. Protein that forms the 55 capsid fibers. These fibers are not always present and may have been lost in some lab strains. They may enhance the attachment of the virions onto the host cell wall. The sequence is that of Capsid fiber protein from Bacillus phage phi29 (Bacteriophage phi-29).